Here is a 1342-residue protein sequence, read N- to C-terminus: DNA-directed RNA polymerase subunit beta (1342 aa).

This sequence belongs to the RNA polymerase beta chain family. As to quaternary structure, the RNAP catalytic core consists of 2 alpha, 1 beta, 1 beta' and 1 omega subunit. When a sigma factor is associated with the core the holoenzyme is formed, which can initiate transcription.

The enzyme catalyses RNA(n) + a ribonucleoside 5'-triphosphate = RNA(n+1) + diphosphate. Its function is as follows. DNA-dependent RNA polymerase catalyzes the transcription of DNA into RNA using the four ribonucleoside triphosphates as substrates. This chain is DNA-directed RNA polymerase subunit beta, found in Klebsiella pneumoniae subsp. pneumoniae (strain ATCC 700721 / MGH 78578).